The chain runs to 476 residues: Bifunctional protein HldE (476 aa).

A ribokinase region spans residues 1-319 (MKVSLPAFEK…EALALHHGES (319 aa)). Position 195–198 (195–198 (NMSE)) interacts with ATP. Residue Asp-264 is part of the active site. Residues 345 to 476 (MTNGCFDILH…AIIQNIMANQ (132 aa)) are cytidylyltransferase.

It in the N-terminal section; belongs to the carbohydrate kinase PfkB family. This sequence in the C-terminal section; belongs to the cytidylyltransferase family. In terms of assembly, homodimer.

It carries out the reaction D-glycero-beta-D-manno-heptose 7-phosphate + ATP = D-glycero-beta-D-manno-heptose 1,7-bisphosphate + ADP + H(+). The enzyme catalyses D-glycero-beta-D-manno-heptose 1-phosphate + ATP + H(+) = ADP-D-glycero-beta-D-manno-heptose + diphosphate. It functions in the pathway nucleotide-sugar biosynthesis; ADP-L-glycero-beta-D-manno-heptose biosynthesis; ADP-L-glycero-beta-D-manno-heptose from D-glycero-beta-D-manno-heptose 7-phosphate: step 1/4. The protein operates within nucleotide-sugar biosynthesis; ADP-L-glycero-beta-D-manno-heptose biosynthesis; ADP-L-glycero-beta-D-manno-heptose from D-glycero-beta-D-manno-heptose 7-phosphate: step 3/4. Its function is as follows. Catalyzes the phosphorylation of D-glycero-D-manno-heptose 7-phosphate at the C-1 position to selectively form D-glycero-beta-D-manno-heptose-1,7-bisphosphate. Catalyzes the ADP transfer from ATP to D-glycero-beta-D-manno-heptose 1-phosphate, yielding ADP-D-glycero-beta-D-manno-heptose. This is Bifunctional protein HldE from Shewanella baltica (strain OS195).